A 471-amino-acid polypeptide reads, in one-letter code: tRNA(Ile)-lysidine synthase (471 aa).

27-32 provides a ligand contact to ATP; that stretch reads SGGPDS.

The protein belongs to the tRNA(Ile)-lysidine synthase family.

It is found in the cytoplasm. The enzyme catalyses cytidine(34) in tRNA(Ile2) + L-lysine + ATP = lysidine(34) in tRNA(Ile2) + AMP + diphosphate + H(+). In terms of biological role, ligates lysine onto the cytidine present at position 34 of the AUA codon-specific tRNA(Ile) that contains the anticodon CAU, in an ATP-dependent manner. Cytidine is converted to lysidine, thus changing the amino acid specificity of the tRNA from methionine to isoleucine. In Dehalococcoides mccartyi (strain CBDB1), this protein is tRNA(Ile)-lysidine synthase.